The sequence spans 567 residues: Methionine--tRNA ligase (567 aa).

The short motif at 11–21 is the 'HIGH' region element; sequence PYVQTVPHLGN. Zn(2+) contacts are provided by Cys143, Cys146, Cys156, and Cys159. Positions 331-335 match the 'KMSKS' region motif; sequence KFSKS. Residue Lys334 coordinates ATP.

This sequence belongs to the class-I aminoacyl-tRNA synthetase family. MetG type 1 subfamily. It depends on Zn(2+) as a cofactor.

The protein localises to the cytoplasm. It catalyses the reaction tRNA(Met) + L-methionine + ATP = L-methionyl-tRNA(Met) + AMP + diphosphate. Functionally, is required not only for elongation of protein synthesis but also for the initiation of all mRNA translation through initiator tRNA(fMet) aminoacylation. This chain is Methionine--tRNA ligase, found in Pyrobaculum islandicum (strain DSM 4184 / JCM 9189 / GEO3).